The following is a 93-amino-acid chain: Probable Fe(2+)-trafficking protein (93 aa).

Belongs to the Fe(2+)-trafficking protein family.

In terms of biological role, could be a mediator in iron transactions between iron acquisition and iron-requiring processes, such as synthesis and/or repair of Fe-S clusters in biosynthetic enzymes. This Acidithiobacillus ferrooxidans (strain ATCC 23270 / DSM 14882 / CIP 104768 / NCIMB 8455) (Ferrobacillus ferrooxidans (strain ATCC 23270)) protein is Probable Fe(2+)-trafficking protein.